Reading from the N-terminus, the 400-residue chain is Cysteine desulfurase (400 aa).

Residues 71–72, Asn150, Gln178, and 198–200 contribute to the pyridoxal 5'-phosphate site; these read GT and SGH. Lys201 is subject to N6-(pyridoxal phosphate)lysine. Residue Thr236 coordinates pyridoxal 5'-phosphate. The active-site Cysteine persulfide intermediate is Cys324. Cys324 contributes to the [2Fe-2S] cluster binding site.

The protein belongs to the class-V pyridoxal-phosphate-dependent aminotransferase family. NifS/IscS subfamily. In terms of assembly, homodimer. Requires pyridoxal 5'-phosphate as cofactor.

It catalyses the reaction (sulfur carrier)-H + L-cysteine = (sulfur carrier)-SH + L-alanine. Its function is as follows. Catalyzes the removal of elemental sulfur atoms from cysteine to produce alanine. Seems to participate in the biosynthesis of the nitrogenase metalloclusters by providing the inorganic sulfur required for the Fe-S core formation. The chain is Cysteine desulfurase from Nostoc sp. (strain PCC 7120 / SAG 25.82 / UTEX 2576).